A 1004-amino-acid chain; its full sequence is UPF0182 protein Mflv_4654 (1004 aa).

7 consecutive transmembrane segments (helical) span residues 18–38, 63–83, 114–134, 176–196, 211–231, 260–280, and 288–308; these read FLIA…RFID, LVIF…GLAL, LIGI…GQSY, FVGV…FGGI, IQLI…YWFD, KLIL…AIFL, and IGVV…PLVV. Over residues 896–940 the composition is skewed to low complexity; it reads PGADATATGPAATEPPAGQAPQTQGNNTAPPAAQPPNRQGQAPAG. A disordered region spans residues 896–960; the sequence is PGADATATGP…TGPTQLSAAK (65 aa).

It belongs to the UPF0182 family.

The protein resides in the cell membrane. The protein is UPF0182 protein Mflv_4654 of Mycolicibacterium gilvum (strain PYR-GCK) (Mycobacterium gilvum (strain PYR-GCK)).